The chain runs to 396 residues: Alanine racemase (396 aa).

K46 functions as the Proton acceptor; specific for D-alanine in the catalytic mechanism. K46 is modified (N6-(pyridoxal phosphate)lysine). R145 contributes to the substrate binding site. The active-site Proton acceptor; specific for L-alanine is Y280. Substrate is bound at residue M328.

This sequence belongs to the alanine racemase family. The cofactor is pyridoxal 5'-phosphate.

It catalyses the reaction L-alanine = D-alanine. It participates in amino-acid biosynthesis; D-alanine biosynthesis; D-alanine from L-alanine: step 1/1. Catalyzes the interconversion of L-alanine and D-alanine. May also act on other amino acids. The protein is Alanine racemase (alr) of Brucella canis (strain ATCC 23365 / NCTC 10854 / RM-666).